The following is a 147-amino-acid chain: 3-dehydroquinate dehydratase 2 (147 aa).

The Proton acceptor role is filled by tyrosine 23. Residues asparagine 74, histidine 80, and aspartate 87 each coordinate substrate. Residue histidine 100 is the Proton donor of the active site. Substrate contacts are provided by residues 101 to 102 and arginine 111; that span reads IS.

Belongs to the type-II 3-dehydroquinase family. Homododecamer.

The enzyme catalyses 3-dehydroquinate = 3-dehydroshikimate + H2O. The protein operates within metabolic intermediate biosynthesis; chorismate biosynthesis; chorismate from D-erythrose 4-phosphate and phosphoenolpyruvate: step 3/7. Functionally, catalyzes a trans-dehydration via an enolate intermediate. This is 3-dehydroquinate dehydratase 2 (aroQ2) from Agrobacterium fabrum (strain C58 / ATCC 33970) (Agrobacterium tumefaciens (strain C58)).